A 345-amino-acid polypeptide reads, in one-letter code: UDP-N-acetylenolpyruvoylglucosamine reductase (345 aa).

Positions 59 to 254 constitute an FAD-binding PCMH-type domain; sequence VGGPAACLAR…RKATQPLGRP (196 aa). Residue R209 is part of the active site. C258 serves as the catalytic Proton donor. The active site involves E328.

Belongs to the MurB family. FAD is required as a cofactor.

Its subcellular location is the cytoplasm. It catalyses the reaction UDP-N-acetyl-alpha-D-muramate + NADP(+) = UDP-N-acetyl-3-O-(1-carboxyvinyl)-alpha-D-glucosamine + NADPH + H(+). It functions in the pathway cell wall biogenesis; peptidoglycan biosynthesis. In terms of biological role, cell wall formation. The protein is UDP-N-acetylenolpyruvoylglucosamine reductase of Syntrophobacter fumaroxidans (strain DSM 10017 / MPOB).